A 112-amino-acid chain; its full sequence is Macrodomain Ori protein (112 aa).

Residues 91–112 (FHTLSGGKPQVEGAEDYTEADD) form a disordered region. Positions 103-112 (GAEDYTEADD) are enriched in acidic residues.

It belongs to the MaoP family.

Functionally, involved in the organization of the Ori region of the chromosome into a macrodomain (MD). It constrains DNA mobility in the Ori macrodomain and limits long-distance DNA interactions with other chromosomal regions. The polypeptide is Macrodomain Ori protein (Salmonella choleraesuis (strain SC-B67)).